Reading from the N-terminus, the 235-residue chain is 1-(5-phosphoribosyl)-5-[(5-phosphoribosylamino)methylideneamino] imidazole-4-carboxamide isomerase (235 aa).

The active-site Proton acceptor is Asp-8. Asp-128 acts as the Proton donor in catalysis.

This sequence belongs to the HisA/HisF family.

It is found in the cytoplasm. It catalyses the reaction 1-(5-phospho-beta-D-ribosyl)-5-[(5-phospho-beta-D-ribosylamino)methylideneamino]imidazole-4-carboxamide = 5-[(5-phospho-1-deoxy-D-ribulos-1-ylimino)methylamino]-1-(5-phospho-beta-D-ribosyl)imidazole-4-carboxamide. Its pathway is amino-acid biosynthesis; L-histidine biosynthesis; L-histidine from 5-phospho-alpha-D-ribose 1-diphosphate: step 4/9. In Thermus thermophilus (strain ATCC 27634 / DSM 579 / HB8), this protein is 1-(5-phosphoribosyl)-5-[(5-phosphoribosylamino)methylideneamino] imidazole-4-carboxamide isomerase.